We begin with the raw amino-acid sequence, 320 residues long: Probable NAD(P)H-dependent D-xylose reductase xyl1 (320 aa).

Tyr50 acts as the Proton donor in catalysis. Residue His112 coordinates substrate. NAD(+) is bound by residues 167 to 168 (SN), 216 to 225 (SSFGPLSFLE), and 272 to 282 (KSNNPTRLSQN).

Belongs to the aldo/keto reductase family.

It catalyses the reaction xylitol + NAD(+) = D-xylose + NADH + H(+). The catalysed reaction is xylitol + NADP(+) = D-xylose + NADPH + H(+). The protein operates within carbohydrate metabolism; D-xylose degradation. Catalyzes the initial reaction in the xylose utilization pathway by reducing D-xylose into xylitol. Xylose is a major component of hemicelluloses such as xylan. Most fungi utilize D-xylose via three enzymatic reactions, xylose reductase (XR), xylitol dehydrogenase (XDH), and xylulokinase, to form xylulose 5-phosphate, which enters pentose phosphate pathway. The polypeptide is Probable NAD(P)H-dependent D-xylose reductase xyl1 (xyl1) (Aspergillus terreus (strain NIH 2624 / FGSC A1156)).